Here is a 176-residue protein sequence, read N- to C-terminus: Mediator of RNA polymerase II transcription subunit 11 (176 aa).

The disordered stretch occupies residues 98–176 (SRVRELEETK…MGGDSSMSTN (79 aa)). A compositionally biased stretch (basic and acidic residues) spans 99–108 (RVRELEETKA). Over residues 124-154 (HAAAQQQQQQQQQQQQQQQQMQQAAQQQQQQ) the composition is skewed to low complexity.

This sequence belongs to the Mediator complex subunit 11 family. In terms of assembly, component of the Mediator complex, which may include CDK8, MED4, MED6, MED11, MED14, MED17, MED18, MED20, MED21, MED22, MED27, MED28, MED30 and MED31.

The protein resides in the nucleus. In terms of biological role, component of the Mediator complex, a coactivator involved in the regulated transcription of nearly all RNA polymerase II-dependent genes. Mediator functions as a bridge to convey information from gene-specific regulatory proteins to the basal RNA polymerase II transcription machinery. Mediator is recruited to promoters by direct interactions with regulatory proteins and serves as a scaffold for the assembly of a functional pre-initiation complex with RNA polymerase II and the general transcription factors. This chain is Mediator of RNA polymerase II transcription subunit 11 (MED11), found in Drosophila melanogaster (Fruit fly).